Consider the following 150-residue polypeptide: D-aminoacyl-tRNA deacylase (150 aa).

Residues Gly-138 to Pro-139 carry the Gly-cisPro motif, important for rejection of L-amino acids motif.

It belongs to the DTD family. In terms of assembly, homodimer.

Its subcellular location is the cytoplasm. The catalysed reaction is glycyl-tRNA(Ala) + H2O = tRNA(Ala) + glycine + H(+). It catalyses the reaction a D-aminoacyl-tRNA + H2O = a tRNA + a D-alpha-amino acid + H(+). Its function is as follows. An aminoacyl-tRNA editing enzyme that deacylates mischarged D-aminoacyl-tRNAs. Also deacylates mischarged glycyl-tRNA(Ala), protecting cells against glycine mischarging by AlaRS. Acts via tRNA-based rather than protein-based catalysis; rejects L-amino acids rather than detecting D-amino acids in the active site. By recycling D-aminoacyl-tRNA to D-amino acids and free tRNA molecules, this enzyme counteracts the toxicity associated with the formation of D-aminoacyl-tRNA entities in vivo and helps enforce protein L-homochirality. This Cytophaga hutchinsonii (strain ATCC 33406 / DSM 1761 / CIP 103989 / NBRC 15051 / NCIMB 9469 / D465) protein is D-aminoacyl-tRNA deacylase.